Consider the following 366-residue polypeptide: 5-hydroxytryptamine receptor 1F (366 aa).

Topologically, residues 1 to 24 (MDFLNSSDQNLTSEELLNRMPSKI) are extracellular. Residues Asn-5 and Asn-10 are each glycosylated (N-linked (GlcNAc...) asparagine). A helical membrane pass occupies residues 25 to 49 (LVSLTLSGLALMTTTINCLVITAII). Topologically, residues 50 to 59 (VTRKLHHPAN) are cytoplasmic. A helical membrane pass occupies residues 60 to 81 (YLICSLAVTDFLVAVLVMPFSI). At 82–96 (VYIVRESWIMGQGLC) the chain is on the extracellular side. Cys-96 and Cys-172 are joined by a disulfide. A helical membrane pass occupies residues 97–119 (DLWLSVDIICCTCSILHLSAIAL). 2 residues coordinate serotonin: Asp-103 and Cys-107. Positions 120–122 (DRY) match the DRY motif; important for ligand-induced conformation changes motif. At 120–139 (DRYRAITDAVEYARKRTPRH) the chain is on the cytoplasmic side. A helical transmembrane segment spans residues 140–159 (AGITITTVWVISVFISVPPL). The Extracellular segment spans residues 160–178 (FWRHQGNSRDDQCIIKHDH). Residues 179-202 (IVSTIYSTFGAFYIPLVLILILYY) form a helical membrane-spanning segment. Residues 203-291 (KIYRAARTLY…KISGTRERKA (89 aa)) lie on the Cytoplasmic side of the membrane. A helical transmembrane segment spans residues 292–315 (ATTLGLILGAFVICWLPFFVKELV). At 316-327 (VNICEKCKISEE) the chain is on the extracellular side. A helical transmembrane segment spans residues 328–350 (MSNFLAWLGYLNSLINPLIYTIF). Residues 343 to 347 (NPLIY) carry the NPxxY motif; important for ligand-induced conformation changes and signaling motif. Residues 351–366 (NEDFKKAFQKLVRCRN) lie on the Cytoplasmic side of the membrane.

Belongs to the G-protein coupled receptor 1 family.

The protein localises to the cell membrane. Functionally, G-protein coupled receptor for 5-hydroxytryptamine (serotonin). Also functions as a receptor for various alkaloids and psychoactive substances. Ligand binding causes a conformation change that triggers signaling via guanine nucleotide-binding proteins (G proteins) and modulates the activity of downstream effectors, such as adenylate cyclase. HTR1F is coupled to G(i)/G(o) G alpha proteins and mediates inhibitory neurotransmission by inhibiting adenylate cyclase activity. In Rattus norvegicus (Rat), this protein is 5-hydroxytryptamine receptor 1F (Htr1f).